A 124-amino-acid polypeptide reads, in one-letter code: U-scoloptoxin-Er5d (124 aa).

The N-terminal stretch at 1 to 22 is a signal peptide; that stretch reads MKTNCEFPLLCLLIVLVANVEG. A propeptide spanning residues 23 to 94 is cleaved from the precursor; sequence EVEDNELKMV…KRLWRNWERR (72 aa). RLWRNWE repeat units lie at residues 34-40, 61-67, and 86-92; these read RLWRNWE. Residue Gln95 is modified to Pyrrolidone carboxylic acid. One copy of the RLWRNWE 4; approximate repeat lies at 107–113; the sequence is ELWRNWE. The propeptide occupies 112–124; the sequence is WEDLKRRQVGRFE.

The protein belongs to the scoloptoxin-08 family. Expressed by the venom gland.

The protein resides in the secreted. The chain is U-scoloptoxin-Er5d from Ethmostigmus rubripes (Giant centipede).